A 262-amino-acid polypeptide reads, in one-letter code: tRNA pseudouridine synthase A (262 aa).

Asp51 (nucleophile) is an active-site residue. Substrate is bound at residue Tyr109.

Belongs to the tRNA pseudouridine synthase TruA family. Homodimer.

It carries out the reaction uridine(38/39/40) in tRNA = pseudouridine(38/39/40) in tRNA. Formation of pseudouridine at positions 38, 39 and 40 in the anticodon stem and loop of transfer RNAs. This chain is tRNA pseudouridine synthase A, found in Dechloromonas aromatica (strain RCB).